The sequence spans 561 residues: Malto-oligosyltrehalose trehalohydrolase (561 aa).

253–258 (RLDAVH) is a substrate binding site. The active-site Nucleophile is D255. The Proton donor role is filled by E286. Residues 311–315 (DDFHH) and 379–384 (HDQVGN) contribute to the substrate site.

This sequence belongs to the glycosyl hydrolase 13 family. As to quaternary structure, homodimer.

Its subcellular location is the cytoplasm. The enzyme catalyses hydrolysis of (1-&gt;4)-alpha-D-glucosidic linkage in 4-alpha-D-[(1-&gt;4)-alpha-D-glucanosyl]n trehalose to yield trehalose and (1-&gt;4)-alpha-D-glucan.. It functions in the pathway glycan biosynthesis; trehalose biosynthesis. This chain is Malto-oligosyltrehalose trehalohydrolase (treZ), found in Saccharolobus solfataricus (strain ATCC 35092 / DSM 1617 / JCM 11322 / P2) (Sulfolobus solfataricus).